The sequence spans 524 residues: MAHRQLYSYALQPSYAAAASTVSPAPPPPQQPLPPKTGLSSLYGSSADHYFPDTTYRFLARDGSEALSNYSGTLASSSSMYHHLPNTTASHLAYPQLLQHQEVAWPPGVEVPGAASAVEPLPPGVKRTSEALYYPTLLGAHNTIGQTEAWYTTDYFTKRPKLESTSHLPIYPQRAGEKDCTHYMQTRTCKFGESCRFDHPIWVPEGGIPDWKEAPVVPNEEYPERPGEPDCPYYIKTQRCKYGSKCKFNHPREEAAVSVETQDSLPERPSEPMCTFYMKTGKCKFGLSCKFHHPKDIQLPSSSQDIGSSVGLTSEPDATNNPHVTFTPALYHNSKGLPVRSGEVDCPFYLKTGSCKYGATCRYNHPERTAFIPQAAGVNYSLVSSNTANLNLGLVTPATSFYQTLTQPTLGVISATYPQRPGQSECDYYMKTGECKFGERCKFHHPADRLSAMTKQAPQQPNVKLSLAGYPRREGALNCPYYMKTGTCKYGATCKFDHPPPGEVMAKTTSEADAAGATNTDTTQ.

The disordered stretch occupies residues 19–39; the sequence is ASTVSPAPPPPQQPLPPKTGL. A compositionally biased stretch (pro residues) spans 24–35; sequence PAPPPPQQPLPP. C3H1-type zinc fingers lie at residues 174-202, 225-253, and 268-296; these read RAGEKDCTHYMQTRTCKFGESCRFDHPIW, RPGEPDCPYYIKTQRCKYGSKCKFNHPRE, and RPSEPMCTFYMKTGKCKFGLSCKFHHPKD. Residues 300-319 form a disordered region; sequence PSSSQDIGSSVGLTSEPDAT. C3H1-type zinc fingers lie at residues 340 to 368, 420 to 448, and 473 to 501; these read RSGEVDCPFYLKTGSCKYGATCRYNHPER, RPGQSECDYYMKTGECKFGERCKFHHPAD, and REGALNCPYYMKTGTCKYGATCKFDHPPP. A disordered region spans residues 505 to 524; the sequence is MAKTTSEADAAGATNTDTTQ. A compositionally biased stretch (low complexity) spans 512 to 524; that stretch reads ADAAGATNTDTTQ.

Interacts with HEN4. Interacts with FLK and PEP. In terms of tissue distribution, highly expressed in inflorescences, at intermediate levels in leaves and stems and at lower levels in roots.

Its subcellular location is the nucleus speckle. In terms of biological role, involved in flower development. Functions in floral reproductive organ identity by binding AGAMOUS (AG) pre-mRNA and promoting its processing. Functions in association with HUA2 and HEN4. This Arabidopsis thaliana (Mouse-ear cress) protein is Zinc finger CCCH domain-containing protein 37 (HUA1).